The following is a 279-amino-acid chain: Ribosomal RNA small subunit methyltransferase A (279 aa).

S-adenosyl-L-methionine-binding residues include N27, L29, G54, E76, D102, and N127.

This sequence belongs to the class I-like SAM-binding methyltransferase superfamily. rRNA adenine N(6)-methyltransferase family. RsmA subfamily.

The protein localises to the cytoplasm. It carries out the reaction adenosine(1518)/adenosine(1519) in 16S rRNA + 4 S-adenosyl-L-methionine = N(6)-dimethyladenosine(1518)/N(6)-dimethyladenosine(1519) in 16S rRNA + 4 S-adenosyl-L-homocysteine + 4 H(+). Its function is as follows. Specifically dimethylates two adjacent adenosines (A1518 and A1519) in the loop of a conserved hairpin near the 3'-end of 16S rRNA in the 30S particle. May play a critical role in biogenesis of 30S subunits. In Mesorhizobium japonicum (strain LMG 29417 / CECT 9101 / MAFF 303099) (Mesorhizobium loti (strain MAFF 303099)), this protein is Ribosomal RNA small subunit methyltransferase A.